A 134-amino-acid chain; its full sequence is Profilin-4 (134 aa).

Residues Cys-13 and Cys-118 are joined by a disulfide bond. Residues 84–100 carry the Involved in PIP2 interaction motif; sequence AVIRGKKGSGGITIKKT. Thr-114 is subject to Phosphothreonine.

Belongs to the profilin family. As to quaternary structure, occurs in many kinds of cells as a complex with monomeric actin in a 1:1 ratio. In terms of processing, phosphorylated by MAP kinases.

It is found in the cytoplasm. The protein resides in the cytoskeleton. Functionally, binds to actin and affects the structure of the cytoskeleton. At high concentrations, profilin prevents the polymerization of actin, whereas it enhances it at low concentrations. This Olea europaea (Common olive) protein is Profilin-4.